The following is an 835-amino-acid chain: Cap-specific mRNA (nucleoside-2'-O-)-methyltransferase 1 (835 aa).

A Bipartite nuclear localization signal motif is present at residues 2 to 19 (RRRNDPECTAPIKKQKKR). The interval 24–68 (ALNLSAASGDEPPSSVNHAAKASTTSLSGSDSETEGKQHGSDSFD) is disordered. Residues S28, S31, S53, S66, and S91 each carry the phosphoserine modification. The segment covering 37-54 (SSVNHAAKASTTSLSGSD) has biased composition (polar residues). Positions 57 to 68 (TEGKQHGSDSFD) are enriched in basic and acidic residues. Positions 87-133 (YNSVSQKLMAKMGFREGEGLGKYSQGRKDIVEASNQKGRRGLGLTLQ) constitute a G-patch domain. Position 108 is an N6-acetyllysine (K108). Residues 203–207 (KSVFD) and R218 each bind substrate. In terms of domain architecture, RrmJ-type SAM-dependent 2'-O-MTase spans 231–450 (FFLNRAAMKM…ERYVVCKGLK (220 aa)). An S-adenosyl-L-methionine-binding site is contributed by N234. Residue K239 is part of the active site. Residues 277-283 (CAGPGGF) and 335-336 (DI) each bind S-adenosyl-L-methionine. D364 is a catalytic residue. 374–376 (NLQ) serves as a coordination point for substrate. K404 acts as the Proton acceptor in catalysis. A substrate-binding site is contributed by N439. The segment at 727-835 (SSGTPKLSYT…VLSFIQTHSA (109 aa)) is interaction with POLR2A. In terms of domain architecture, WW spans 752–786 (RTVNEPWTMGFSKSFKRKFFYNKKTKISTFDLPAD).

Interacts with POLR2A (via C-terminus).

Its subcellular location is the nucleus. The enzyme catalyses a 5'-end (N(7)-methyl 5'-triphosphoguanosine)-ribonucleoside in mRNA + S-adenosyl-L-methionine = a 5'-end (N(7)-methyl 5'-triphosphoguanosine)-(2'-O-methyl-ribonucleoside) in mRNA + S-adenosyl-L-homocysteine + H(+). S-adenosyl-L-methionine-dependent methyltransferase that mediates mRNA cap1 2'-O-ribose methylation to the 5'-cap structure of mRNAs. Methylates the ribose of the first nucleotide of a m(7)GpppG-capped mRNA and small nuclear RNA (snRNA) to produce m(7)GpppRm (cap1). Displays a preference for cap0 transcripts. Cap1 modification is linked to higher levels of translation. May be involved in the interferon response pathway. The polypeptide is Cap-specific mRNA (nucleoside-2'-O-)-methyltransferase 1 (CMTR1) (Ailuropoda melanoleuca (Giant panda)).